Here is a 361-residue protein sequence, read N- to C-terminus: Chorismate synthase (361 aa).

NADP(+)-binding residues include R48 and R54. Residues 125-127, 238-239, G278, 293-297, and R319 contribute to the FMN site; these read RSS, NA, and KPTSS.

This sequence belongs to the chorismate synthase family. In terms of assembly, homotetramer. It depends on FMNH2 as a cofactor.

The catalysed reaction is 5-O-(1-carboxyvinyl)-3-phosphoshikimate = chorismate + phosphate. Its pathway is metabolic intermediate biosynthesis; chorismate biosynthesis; chorismate from D-erythrose 4-phosphate and phosphoenolpyruvate: step 7/7. Catalyzes the anti-1,4-elimination of the C-3 phosphate and the C-6 proR hydrogen from 5-enolpyruvylshikimate-3-phosphate (EPSP) to yield chorismate, which is the branch point compound that serves as the starting substrate for the three terminal pathways of aromatic amino acid biosynthesis. This reaction introduces a second double bond into the aromatic ring system. In Yersinia enterocolitica serotype O:8 / biotype 1B (strain NCTC 13174 / 8081), this protein is Chorismate synthase.